We begin with the raw amino-acid sequence, 449 residues long: Glucose-6-phosphate isomerase (449 aa).

Glu291 serves as the catalytic Proton donor. Active-site residues include His312 and Lys426.

It belongs to the GPI family.

The protein localises to the cytoplasm. The catalysed reaction is alpha-D-glucose 6-phosphate = beta-D-fructose 6-phosphate. It functions in the pathway carbohydrate biosynthesis; gluconeogenesis. It participates in carbohydrate degradation; glycolysis; D-glyceraldehyde 3-phosphate and glycerone phosphate from D-glucose: step 2/4. Its function is as follows. Catalyzes the reversible isomerization of glucose-6-phosphate to fructose-6-phosphate. This Pediococcus pentosaceus (strain ATCC 25745 / CCUG 21536 / LMG 10740 / 183-1w) protein is Glucose-6-phosphate isomerase.